A 698-amino-acid chain; its full sequence is 4-hydroxybutyrate--CoA ligase [ADP-forming] (698 aa).

Positions Gln-491–Val-544 constitute an ATP-grasp domain. Ala-517–Val-544 contributes to the ATP binding site.

This sequence in the N-terminal section; belongs to the acetate CoA ligase alpha subunit family. In the C-terminal section; belongs to the acetate CoA ligase beta subunit family. It depends on Mg(2+) as a cofactor. Mn(2+) is required as a cofactor.

It carries out the reaction 4-hydroxybutanoate + ATP + CoA = 4-hydroxybutanoyl-CoA + ADP + phosphate. In terms of biological role, involved in thaumarchaeal hydroxypropionate/hydroxybutyrate (HP/HB) cycle, a modified version of the autotrophic HP/HB cycle of Crenarchaeota. Catalyzes the formation of 4-hydroxybutyryl-CoA, ADP and phosphate from 4-hydroxybutyrate, coenzyme A (CoA) and ATP. Can also use acetate, propionate and butyrate, with poor catalytic efficiency. This chain is 4-hydroxybutyrate--CoA ligase [ADP-forming], found in Nitrosopumilus maritimus (strain SCM1).